We begin with the raw amino-acid sequence, 469 residues long: GDNF family receptor alpha-1 (469 aa).

An N-terminal signal peptide occupies residues 1-27 (MFLALLYLALPLADVLLSAEVSGLPGG). Repeat copies occupy residues 28–116 (DRLD…LQGN), 149–237 (KGNN…YEDR), and 238–341 (EKPN…KNAI). Cysteines 39 and 45 form a disulfide. Residues N62 and N163 are each glycosylated (N-linked (GlcNAc...) asparagine). Cystine bridges form between C153–C213, C160–C166, C177–C191, C186–C232, C215–C220, C242–C312, C249–C255, C266–C284, C276–C336, and C314–C324. N-linked (GlcNAc...) asparagine glycosylation is found at N346 and N405. The GPI-anchor amidated serine moiety is linked to residue S430. Residues 431–469 (HISSENSFALPTSFYPSTPLILMTIALSLFLFLSSSVVL) constitute a propeptide, removed in mature form.

Belongs to the GDNFR family. Interacts with GDNF ligand and RET: forms a 2:2:2 ternary complex composed of GDNF ligand, GFRA1 and RET receptor.

Its subcellular location is the cell membrane. The protein resides in the golgi apparatus. It localises to the trans-Golgi network. It is found in the endosome. The protein localises to the multivesicular body. In terms of biological role, coreceptor for GDNF, a neurotrophic factor that enhances survival and morphological differentiation of dopaminergic neurons and increases their high-affinity dopamine uptake. GDNF-binding leads to autophosphorylation and activation of the RET receptor. The polypeptide is GDNF family receptor alpha-1 (GFRA1) (Gallus gallus (Chicken)).